Here is a 475-residue protein sequence, read N- to C-terminus: Sulfate adenylyltransferase subunit 1 (475 aa).

Positions 25-239 (KSLLRFLTCG…EVLETVEIQR (215 aa)) constitute a tr-type G domain. A G1 region spans residues 34-41 (GSVDDGKS). GTP is bound at residue 34–41 (GSVDDGKS). A G2 region spans residues 92–96 (GITID). Residues 113-116 (DTPG) form a G3 region. GTP is bound by residues 113-117 (DTPGH) and 168-171 (NKMD). A G4 region spans residues 168 to 171 (NKMD). The interval 206 to 208 (SAL) is G5.

This sequence belongs to the TRAFAC class translation factor GTPase superfamily. Classic translation factor GTPase family. CysN/NodQ subfamily. As to quaternary structure, heterodimer composed of CysD, the smaller subunit, and CysN.

The enzyme catalyses sulfate + ATP + H(+) = adenosine 5'-phosphosulfate + diphosphate. The protein operates within sulfur metabolism; hydrogen sulfide biosynthesis; sulfite from sulfate: step 1/3. Functionally, with CysD forms the ATP sulfurylase (ATPS) that catalyzes the adenylation of sulfate producing adenosine 5'-phosphosulfate (APS) and diphosphate, the first enzymatic step in sulfur assimilation pathway. APS synthesis involves the formation of a high-energy phosphoric-sulfuric acid anhydride bond driven by GTP hydrolysis by CysN coupled to ATP hydrolysis by CysD. In Citrobacter koseri (strain ATCC BAA-895 / CDC 4225-83 / SGSC4696), this protein is Sulfate adenylyltransferase subunit 1.